Consider the following 297-residue polypeptide: TGF-beta receptor type-2 (297 aa).

The N-terminal stretch at 1–23 (MGRGLLGGLWPLHVVLWTRIAST) is a signal peptide. Over 24–166 (IPPHVPKSVN…NPDLLLVIFQ (143 aa)) the chain is Extracellular. 6 disulfides stabilise this stretch: Cys51-Cys84, Cys54-Cys71, Cys61-Cys67, Cys77-Cys101, Cys121-Cys136, and Cys138-Cys143. N-linked (GlcNAc...) asparagine glycans are attached at residues Asn70 and Asn94. A helical transmembrane segment spans residues 167-187 (VTGVSLLPPLGIAIAVIITFY). The Cytoplasmic portion of the chain corresponds to 188-297 (CYRVHRQQKL…KTEKDIFSDL (110 aa)). One can recognise a Protein kinase domain in the interval 244–297 (IELDTLVGKGRFAEVYKAKLRQNTSEQFETVAVKIFPYEEYASWKTEKDIFSDL). Residues 250 to 258 (VGKGRFAEV) and Lys277 each bind ATP.

This sequence belongs to the protein kinase superfamily. TKL Ser/Thr protein kinase family. TGFB receptor subfamily. In terms of assembly, homodimer. Heterohexamer; TGFB1, TGFB2 and TGFB3 homodimeric ligands assemble a functional receptor composed of two TGFBR1 and TGFBR2 heterodimers to form a ligand-receptor heterohexamer. The respective affinity of TGFRB1 and TGFRB2 for the ligands may modulate the kinetics of assembly of the receptor and may explain the different biological activities of TGFB1, TGFB2 and TGFB3. Component of a complex composed of TSC22D1 (via N-terminus), TGFBR1 and TGFBR2; the interaction between TSC22D1 and TGFBR1 is inhibited by SMAD7 and promoted by TGFB1. Interacts with DAXX. Interacts with DYNLT4. Interacts with ZFYVE9; ZFYVE9 recruits SMAD2 and SMAD3 to the TGF-beta receptor. Interacts with and is activated by SCUBE3; this interaction does not affect TGFB1-binding to TGFBR2. Interacts with VPS39; this interaction is independent of the receptor kinase activity and of the presence of TGF-beta. Interacts with CLU. Mg(2+) is required as a cofactor. The cofactor is Mn(2+). Phosphorylated on a Ser/Thr residue in the cytoplasmic domain.

It localises to the cell membrane. The protein resides in the membrane raft. The catalysed reaction is L-threonyl-[receptor-protein] + ATP = O-phospho-L-threonyl-[receptor-protein] + ADP + H(+). The enzyme catalyses L-seryl-[receptor-protein] + ATP = O-phospho-L-seryl-[receptor-protein] + ADP + H(+). In terms of biological role, transmembrane serine/threonine kinase forming with the TGF-beta type I serine/threonine kinase receptor, TGFBR1, the non-promiscuous receptor for the TGF-beta cytokines TGFB1, TGFB2 and TGFB3. Transduces the TGFB1, TGFB2 and TGFB3 signal from the cell surface to the cytoplasm and is thus regulating a plethora of physiological and pathological processes including cell cycle arrest in epithelial and hematopoietic cells, control of mesenchymal cell proliferation and differentiation, wound healing, extracellular matrix production, immunosuppression and carcinogenesis. The formation of the receptor complex composed of 2 TGFBR1 and 2 TGFBR2 molecules symmetrically bound to the cytokine dimer results in the phosphorylation and the activation of TGFRB1 by the constitutively active TGFBR2. Activated TGFBR1 phosphorylates SMAD2 which dissociates from the receptor and interacts with SMAD4. The SMAD2-SMAD4 complex is subsequently translocated to the nucleus where it modulates the transcription of the TGF-beta-regulated genes. This constitutes the canonical SMAD-dependent TGF-beta signaling cascade. Also involved in non-canonical, SMAD-independent TGF-beta signaling pathways. The polypeptide is TGF-beta receptor type-2 (TGFBR2) (Sus scrofa (Pig)).